Here is a 541-residue protein sequence, read N- to C-terminus: T-complex protein 1 subunit epsilon (541 aa).

Residue Ala2 is modified to N-acetylalanine. A Glycyl lysine isopeptide (Lys-Gly) (interchain with G-Cter in SUMO2) cross-link involves residue Lys20. Ser26 is modified (phosphoserine). ADP is bound at residue Gly53. Residue Gly53 participates in ATP binding. Asp104 lines the Mg(2+) pocket. Residues Gly105, Thr106, Thr107, and Ser175 each coordinate ADP. ATP is bound by residues Thr106 and Thr107. Glycyl lysine isopeptide (Lys-Gly) (interchain with G-Cter in SUMO2) cross-links involve residues Lys210, Lys214, Lys265, Lys275, and Lys279. The residue at position 346 (Ser346) is a Phosphoserine. Lys392 is covalently cross-linked (Glycyl lysine isopeptide (Lys-Gly) (interchain with G-Cter in SUMO2)). 4 residues coordinate ADP: Gly422, Asp492, Glu508, and Lys513. Gly422 serves as a coordination point for ATP. Position 539 is a phosphoserine (Ser539).

Belongs to the TCP-1 chaperonin family. Component of the chaperonin-containing T-complex (TRiC), a hexadecamer composed of two identical back-to-back stacked rings enclosing a protein folding chamber. Each ring is made up of eight different subunits: TCP1/CCT1, CCT2, CCT3, CCT4, CCT5, CCT6A/CCT6, CCT7, CCT8. Interacts with PACRG. Interacts with DNAAF4. Interacts with DLEC1. Interacts with SPMAP2. Ubiquitinated by the DCX(DCAF12) complex specifically recognizes the diglutamate (Glu-Glu) at the C-terminus, leading to its degradation.

It is found in the cytoplasm. It localises to the cytoskeleton. The protein localises to the microtubule organizing center. Its subcellular location is the centrosome. It catalyses the reaction ATP + H2O = ADP + phosphate + H(+). Functionally, component of the chaperonin-containing T-complex (TRiC), a molecular chaperone complex that assists the folding of actin, tubulin and other proteins upon ATP hydrolysis. The TRiC complex mediates the folding of WRAP53/TCAB1, thereby regulating telomere maintenance. As part of the TRiC complex may play a role in the assembly of BBSome, a complex involved in ciliogenesis regulating transports vesicles to the cilia. The chain is T-complex protein 1 subunit epsilon (CCT5) from Pongo abelii (Sumatran orangutan).